The sequence spans 205 residues: Histidine biosynthesis bifunctional protein HisIE (205 aa).

Positions 1–116 are phosphoribosyl-AMP cyclohydrolase; sequence MLKLKFNEEG…KVEKPLPFEV (116 aa). Residues 117-205 are phosphoribosyl-ATP pyrophosphohydrolase; the sequence is LPRLQDVIRE…VMEELIRRFK (89 aa).

In the N-terminal section; belongs to the PRA-CH family. It in the C-terminal section; belongs to the PRA-PH family.

Its subcellular location is the cytoplasm. It catalyses the reaction 1-(5-phospho-beta-D-ribosyl)-ATP + H2O = 1-(5-phospho-beta-D-ribosyl)-5'-AMP + diphosphate + H(+). The catalysed reaction is 1-(5-phospho-beta-D-ribosyl)-5'-AMP + H2O = 1-(5-phospho-beta-D-ribosyl)-5-[(5-phospho-beta-D-ribosylamino)methylideneamino]imidazole-4-carboxamide. It functions in the pathway amino-acid biosynthesis; L-histidine biosynthesis; L-histidine from 5-phospho-alpha-D-ribose 1-diphosphate: step 2/9. The protein operates within amino-acid biosynthesis; L-histidine biosynthesis; L-histidine from 5-phospho-alpha-D-ribose 1-diphosphate: step 3/9. In Aquifex aeolicus (strain VF5), this protein is Histidine biosynthesis bifunctional protein HisIE (hisI).